A 307-amino-acid polypeptide reads, in one-letter code: Heme A synthase (307 aa).

At 1–6 the chain is on the cytoplasmic side; that stretch reads MKFALR. The chain crosses the membrane as a helical span at residues 7 to 27; the sequence is LLSVITTFVMLIVLIGGALVT. Over 28–65 the chain is Extracellular; the sequence is KTGSGLGCGRQWPLCHGRFFPEMNPASIIEWSHRMSTG. A disulfide bond links cysteine 35 and cysteine 42. Glutamate 57 is a catalytic residue. Histidine 60 lines the heme o pocket. Residues 66–86 traverse the membrane as a helical segment; the sequence is VSTILVLALAVLCWKKISPVF. Residues 87-92 lie on the Cytoplasmic side of the membrane; the sequence is RETKFL. Residues 93–113 form a helical membrane-spanning segment; sequence VIMSIIFLLLQALLGALAVVF. The Extracellular portion of the chain corresponds to 114–121; that stretch reads GSNALVMA. The chain crosses the membrane as a helical span at residues 122–142; sequence LHFGISLISFASVLLLALLVF. Histidine 123 contacts heme o. Over 143-161 the chain is Cytoplasmic; that stretch reads EATRSETKLVKPLHIGKKM. A helical membrane pass occupies residues 162 to 182; sequence QFHIYGLITYTYIVVYTGAYV. Topologically, residues 183–216 are extracellular; that stretch reads RHTKSSLACSVFPFCSKDGALPAYFNQWVQMSHR. A disulfide bridge links cysteine 191 with cysteine 197. Histidine 215 serves as a coordination point for heme b. A helical membrane pass occupies residues 217-237; sequence AAALLLFVWIFVAMFHAMKHY. Residues 238–242 lie on the Cytoplasmic side of the membrane; sequence KEQKQ. The chain crosses the membrane as a helical span at residues 243–263; sequence LYYGWIISAILITLQAISGVM. Over 264–274 the chain is Extracellular; that stretch reads SVYSQLALGYA. Residues 275 to 295 traverse the membrane as a helical segment; it reads LAHSFFISCLFGVLCYFCLLI. Heme b is bound at residue histidine 277. The Cytoplasmic portion of the chain corresponds to 296 to 307; the sequence is ARFKYESKEPFK.

It belongs to the COX15/CtaA family. Type 1 subfamily. In terms of assembly, interacts with CtaB. Heme b serves as cofactor.

Its subcellular location is the cell membrane. It carries out the reaction Fe(II)-heme o + 2 A + H2O = Fe(II)-heme a + 2 AH2. It participates in porphyrin-containing compound metabolism; heme A biosynthesis; heme A from heme O: step 1/1. Its function is as follows. Catalyzes the conversion of heme O to heme A by two successive hydroxylations of the methyl group at C8. The first hydroxylation forms heme I, the second hydroxylation results in an unstable dihydroxymethyl group, which spontaneously dehydrates, resulting in the formyl group of heme A. This chain is Heme A synthase, found in Bacillus pumilus (strain SAFR-032).